A 272-amino-acid chain; its full sequence is Formamidopyrimidine-DNA glycosylase (272 aa).

P2 (schiff-base intermediate with DNA) is an active-site residue. The Proton donor role is filled by E3. The active-site Proton donor; for beta-elimination activity is K56. Residues H89, R108, and K149 each coordinate DNA. The FPG-type zinc-finger motif lies at 234-268 (LAYGRAGEMCVNCETPLENLKLGQRASVFCPQCQP). The active-site Proton donor; for delta-elimination activity is the R258.

This sequence belongs to the FPG family. As to quaternary structure, monomer. Requires Zn(2+) as cofactor.

It carries out the reaction Hydrolysis of DNA containing ring-opened 7-methylguanine residues, releasing 2,6-diamino-4-hydroxy-5-(N-methyl)formamidopyrimidine.. The catalysed reaction is 2'-deoxyribonucleotide-(2'-deoxyribose 5'-phosphate)-2'-deoxyribonucleotide-DNA = a 3'-end 2'-deoxyribonucleotide-(2,3-dehydro-2,3-deoxyribose 5'-phosphate)-DNA + a 5'-end 5'-phospho-2'-deoxyribonucleoside-DNA + H(+). Its function is as follows. Involved in base excision repair of DNA damaged by oxidation or by mutagenic agents. Acts as a DNA glycosylase that recognizes and removes damaged bases. Has a preference for oxidized purines, such as 7,8-dihydro-8-oxoguanine (8-oxoG). Has AP (apurinic/apyrimidinic) lyase activity and introduces nicks in the DNA strand. Cleaves the DNA backbone by beta-delta elimination to generate a single-strand break at the site of the removed base with both 3'- and 5'-phosphates. This is Formamidopyrimidine-DNA glycosylase from Acinetobacter baylyi (strain ATCC 33305 / BD413 / ADP1).